A 152-amino-acid polypeptide reads, in one-letter code: Large ribosomal subunit protein bL9 (152 aa).

It belongs to the bacterial ribosomal protein bL9 family.

Its function is as follows. Binds to the 23S rRNA. The protein is Large ribosomal subunit protein bL9 of Mycobacterium ulcerans (strain Agy99).